A 78-amino-acid polypeptide reads, in one-letter code: Large ribosomal subunit protein bL28 (78 aa).

The interval 1–23 (MSRKCQITGKKANNAMAVSHSHR) is disordered.

Belongs to the bacterial ribosomal protein bL28 family.

The sequence is that of Large ribosomal subunit protein bL28 from Picosynechococcus sp. (strain ATCC 27264 / PCC 7002 / PR-6) (Agmenellum quadruplicatum).